The primary structure comprises 304 residues: Porphobilinogen deaminase (304 aa).

At C241 the chain carries S-(dipyrrolylmethanemethyl)cysteine.

This sequence belongs to the HMBS family. In terms of assembly, monomer. It depends on dipyrromethane as a cofactor.

It carries out the reaction 4 porphobilinogen + H2O = hydroxymethylbilane + 4 NH4(+). It participates in porphyrin-containing compound metabolism; protoporphyrin-IX biosynthesis; coproporphyrinogen-III from 5-aminolevulinate: step 2/4. Functionally, tetrapolymerization of the monopyrrole PBG into the hydroxymethylbilane pre-uroporphyrinogen in several discrete steps. This is Porphobilinogen deaminase from Ruthia magnifica subsp. Calyptogena magnifica.